The sequence spans 452 residues: Pup--protein ligase (452 aa).

Glu9 is a binding site for Mg(2+). Position 53 (Arg53) interacts with ATP. Tyr55 contacts Mg(2+). The active-site Proton acceptor is the Asp57. Glu63 contributes to the Mg(2+) binding site. ATP-binding residues include Thr66 and Trp419.

The protein belongs to the Pup ligase/Pup deamidase family. Pup-conjugating enzyme subfamily.

It carries out the reaction ATP + [prokaryotic ubiquitin-like protein]-L-glutamate + [protein]-L-lysine = ADP + phosphate + N(6)-([prokaryotic ubiquitin-like protein]-gamma-L-glutamyl)-[protein]-L-lysine.. It functions in the pathway protein degradation; proteasomal Pup-dependent pathway. The protein operates within protein modification; protein pupylation. Functionally, catalyzes the covalent attachment of the prokaryotic ubiquitin-like protein modifier Pup to the proteasomal substrate proteins, thereby targeting them for proteasomal degradation. This tagging system is termed pupylation. The ligation reaction involves the side-chain carboxylate of the C-terminal glutamate of Pup and the side-chain amino group of a substrate lysine. This Gordonia bronchialis (strain ATCC 25592 / DSM 43247 / BCRC 13721 / JCM 3198 / KCTC 3076 / NBRC 16047 / NCTC 10667) (Rhodococcus bronchialis) protein is Pup--protein ligase.